Consider the following 1572-residue polypeptide: Multiple epidermal growth factor-like domains protein 6 (1572 aa).

Positions 1 to 26 (MPVGVEARASWRVVALTLLLLPAVPA) are cleaved as a signal peptide. An EMI domain is found at 40 to 121 (MPHVCAEQKL…QKPGQEGCLS (82 aa)). Disulfide bonds link cysteine 44-cysteine 107, cysteine 73-cysteine 79, cysteine 106-cysteine 119, cysteine 126-cysteine 137, cysteine 133-cysteine 146, cysteine 148-cysteine 161, cysteine 167-cysteine 178, cysteine 174-cysteine 187, cysteine 189-cysteine 202, cysteine 291-cysteine 302, cysteine 298-cysteine 311, cysteine 313-cysteine 326, cysteine 418-cysteine 429, cysteine 425-cysteine 438, cysteine 440-cysteine 453, cysteine 522-cysteine 535, cysteine 529-cysteine 542, cysteine 544-cysteine 553, cysteine 566-cysteine 578, cysteine 572-cysteine 585, cysteine 587-cysteine 596, cysteine 609-cysteine 621, cysteine 615-cysteine 628, cysteine 630-cysteine 639, cysteine 788-cysteine 797, cysteine 791-cysteine 804, cysteine 806-cysteine 815, cysteine 832-cysteine 840, cysteine 834-cysteine 847, cysteine 849-cysteine 858, cysteine 871-cysteine 884, cysteine 875-cysteine 891, cysteine 893-cysteine 902, cysteine 915-cysteine 927, cysteine 921-cysteine 934, and cysteine 936-cysteine 945. The EGF-like 1; calcium-binding domain occupies 122–162 (DVDECANANGGCEGPCCNTVGGFYCRCPPGYQLQGDGKTCQ). The region spanning 163–203 (DVDECRSHNGGCQHRCVNTPGSYLCECKPGFRLHTDGRTCL) is the EGF-like 2; calcium-binding domain. The EGF-like 3; calcium-binding domain occupies 287–327 (DVDECALGLAQCAHGCLNTQGSFKCVCHAGYELGADGRQCY). The EGF-like 4; calcium-binding domain maps to 414–454 (DVDECASGHSGCEHHCSNLAGSFQCFCEAGYRLDEDRRGCT). 17 EGF-like domains span residues 518 to 554 (FGHD…IICN), 562 to 597 (FGKN…AHCE), 605 to 640 (YGKH…RFCH), 785 to 816 (QEIC…SRCQ), 829 to 859 (QMRC…LSCQ), 867 to 903 (WGPD…PQCE), 911 to 946 (FGPG…SFCE), 997 to 1032 (FGLN…PTCL), 1040 to 1075 (YGKN…LACE), 1083 to 1118 (HGAG…DKCQ), 1131 to 1161 (EEHC…SHCE), 1169 to 1204 (FGEA…PGCE), 1256 to 1291 (YGPG…ADCS), 1299 to 1334 (FGPS…GHCE), 1342 to 1377 (FGKG…PHCE), 1390 to 1420 (LLEC…QACE), and 1428 to 1463 (HGSG…QFCE). N-linked (GlcNAc...) asparagine glycosylation occurs at asparagine 1000. 30 disulfide bridges follow: cysteine 1001–cysteine 1013, cysteine 1007–cysteine 1020, cysteine 1022–cysteine 1031, cysteine 1044–cysteine 1056, cysteine 1050–cysteine 1063, cysteine 1065–cysteine 1074, cysteine 1087–cysteine 1099, cysteine 1093–cysteine 1106, cysteine 1108–cysteine 1117, cysteine 1134–cysteine 1142, cysteine 1136–cysteine 1149, cysteine 1151–cysteine 1160, cysteine 1173–cysteine 1185, cysteine 1177–cysteine 1192, cysteine 1194–cysteine 1203, cysteine 1260–cysteine 1272, cysteine 1266–cysteine 1279, cysteine 1281–cysteine 1290, cysteine 1303–cysteine 1315, cysteine 1309–cysteine 1322, cysteine 1324–cysteine 1333, cysteine 1346–cysteine 1358, cysteine 1352–cysteine 1365, cysteine 1367–cysteine 1376, cysteine 1393–cysteine 1401, cysteine 1395–cysteine 1408, cysteine 1410–cysteine 1419, cysteine 1432–cysteine 1444, cysteine 1438–cysteine 1451, and cysteine 1453–cysteine 1462.

The protein localises to the secreted. In Mus musculus (Mouse), this protein is Multiple epidermal growth factor-like domains protein 6 (Megf6).